A 71-amino-acid polypeptide reads, in one-letter code: UPF0346 protein SPG_0874 (71 aa).

This sequence belongs to the UPF0346 family.

The protein is UPF0346 protein SPG_0874 of Streptococcus pneumoniae serotype 19F (strain G54).